The primary structure comprises 710 residues: Polyribonucleotide nucleotidyltransferase (710 aa).

Residues Asp487 and Asp493 each coordinate Mg(2+). Residues 554-613 (PKIITMTINPDKIRDVIGPSGKQINKIIEETGVKIDIEQDGTVFISSIDQQMNEKAKKII) enclose the KH domain. An S1 motif domain is found at 623–691 (GEIYLGKVKR…KQGRVNLSRK (69 aa)).

This sequence belongs to the polyribonucleotide nucleotidyltransferase family. The cofactor is Mg(2+).

It is found in the cytoplasm. It catalyses the reaction RNA(n+1) + phosphate = RNA(n) + a ribonucleoside 5'-diphosphate. Its function is as follows. Involved in mRNA degradation. Catalyzes the phosphorolysis of single-stranded polyribonucleotides processively in the 3'- to 5'-direction. The protein is Polyribonucleotide nucleotidyltransferase of Bacillus cytotoxicus (strain DSM 22905 / CIP 110041 / 391-98 / NVH 391-98).